The sequence spans 1214 residues: Spliceosome-associated protein 130 A (1214 aa).

The tract at residues 817 to 848 (AGGVGENGNGNADQMENGADDEDKEDPLSDEQ) is disordered. Acidic residues predominate over residues 834 to 845 (GADDEDKEDPLS).

Belongs to the RSE1 family. Identified in the spliceosome C complex. Component of the U11/U12 snRNPs that are part of the U12-type spliceosome. Component of splicing factor SF3B complex. In terms of tissue distribution, expressed at low levels in roots, leaves, inflorescence and, to a lower extent, in siliques.

Its subcellular location is the nucleus. Its function is as follows. Subunit of the splicing factor SF3B required for 'A' complex assembly formed by the stable binding of U2 snRNP to the branchpoint sequence (BPS) in pre-mRNA. Sequence independent binding of SF3A/SF3B complex upstream of the branch site is essential, it may anchor U2 snRNP to the pre-mRNA. May also be involved in the assembly of the 'E' complex. Also belongs to the minor U12-dependent spliceosome, which is involved in the splicing of rare class of nuclear pre-mRNA intron. Required for pollen and ovule development, especially during the transition from microspore to the bicellular stage in pollen development. Involved in the accumulation of QRT1 and QRT3. This Arabidopsis thaliana (Mouse-ear cress) protein is Spliceosome-associated protein 130 A.